The primary structure comprises 156 residues: ATP synthase subunit b (156 aa).

A helical transmembrane segment spans residues 11–31 (AIAFILFVWFCMKYVWPPLMA).

Belongs to the ATPase B chain family. In terms of assembly, F-type ATPases have 2 components, F(1) - the catalytic core - and F(0) - the membrane proton channel. F(1) has five subunits: alpha(3), beta(3), gamma(1), delta(1), epsilon(1). F(0) has three main subunits: a(1), b(2) and c(10-14). The alpha and beta chains form an alternating ring which encloses part of the gamma chain. F(1) is attached to F(0) by a central stalk formed by the gamma and epsilon chains, while a peripheral stalk is formed by the delta and b chains.

Its subcellular location is the cell inner membrane. F(1)F(0) ATP synthase produces ATP from ADP in the presence of a proton or sodium gradient. F-type ATPases consist of two structural domains, F(1) containing the extramembraneous catalytic core and F(0) containing the membrane proton channel, linked together by a central stalk and a peripheral stalk. During catalysis, ATP synthesis in the catalytic domain of F(1) is coupled via a rotary mechanism of the central stalk subunits to proton translocation. Functionally, component of the F(0) channel, it forms part of the peripheral stalk, linking F(1) to F(0). In Salmonella agona (strain SL483), this protein is ATP synthase subunit b.